Here is a 252-residue protein sequence, read N- to C-terminus: Phosphosulfolactate synthase (252 aa).

It belongs to the phosphosulfolactate synthase family.

It catalyses the reaction (2R)-O-phospho-3-sulfolactate = phosphoenolpyruvate + sulfite + H(+). Catalyzes the addition of sulfite to phosphoenolpyruvate (PEP) to yield (2R)-phospho-3-sulfolactate (PSL). Is probably involved in the biosynthesis of L-sulfolactate, which is a major constituent of sporulating cells and mature spores. In Bacillus subtilis (strain 168), this protein is Phosphosulfolactate synthase (yitD).